The sequence spans 100 residues: UPF0213 protein YhbQ (100 aa).

The 76-residue stretch at 2 to 77 folds into the GIY-YIG domain; the sequence is TPWYLYLIRT…KQLTKRQKER (76 aa).

This sequence belongs to the UPF0213 family.

The chain is UPF0213 protein YhbQ from Salmonella arizonae (strain ATCC BAA-731 / CDC346-86 / RSK2980).